A 160-amino-acid chain; its full sequence is Anaerobic nitrite reductase AHB1 (160 aa).

Residues 8–157 (VFTEEQEALV…LVAAIKAEMN (150 aa)) form the Globin domain. The short motif at 41–45 (EIAPT) is the Homodimerization element. Residues serine 51, lysine 65, histidine 69, arginine 99, serine 103, and histidine 104 each coordinate heme b. The short motif at 111–123 (DEHFEVAKYALLE) is the Homodimerization element.

Belongs to the plant globin family. In terms of assembly, homodimer. Heme b serves as cofactor. Expressed in roots and rosette leaves.

It is found in the cytoplasm. The protein resides in the nucleus. The enzyme catalyses Fe(III)-heme b-[protein] + nitric oxide + H2O = Fe(II)-heme b-[protein] + nitrite + 2 H(+). Phytoglobin that reduces nitrite to nitric oxide (NO) under anoxic conditions (e.g. during flooding or in waterlogged soil). May not function as an oxygen storage or transport protein. Has an unusually high affinity for O(2) through an hexacoordinate heme iron because of a very low dissociation constant. This is Anaerobic nitrite reductase AHB1 from Arabidopsis thaliana (Mouse-ear cress).